The primary structure comprises 126 residues: Large ribosomal subunit protein eL32 (126 aa).

It belongs to the eukaryotic ribosomal protein eL32 family. As to quaternary structure, part of the 50S ribosomal subunit.

The protein is Large ribosomal subunit protein eL32 (rpl32e) of Thermococcus kodakarensis (strain ATCC BAA-918 / JCM 12380 / KOD1) (Pyrococcus kodakaraensis (strain KOD1)).